Here is a 102-residue protein sequence, read N- to C-terminus: Small ribosomal subunit protein eS24 (102 aa).

The protein belongs to the eukaryotic ribosomal protein eS24 family.

The chain is Small ribosomal subunit protein eS24 from Methanobrevibacter smithii (strain ATCC 35061 / DSM 861 / OCM 144 / PS).